Here is a 138-residue protein sequence, read N- to C-terminus: Acidic phospholipase A2 Ts-A6 (138 aa).

A signal peptide spans 1–16; sequence MRALWIMAVLLLGVEG. Cystine bridges form between Cys-42–Cys-131, Cys-44–Cys-60, Cys-59–Cys-111, Cys-65–Cys-138, Cys-66–Cys-104, Cys-73–Cys-97, and Cys-91–Cys-102. Residues Tyr-43, Gly-45, and Gly-47 each coordinate Ca(2+). His-63 is an active-site residue. Position 64 (Asp-64) interacts with Ca(2+). Asp-105 is a catalytic residue.

Requires Ca(2+) as cofactor. In terms of tissue distribution, expressed by the venom gland.

It is found in the secreted. The catalysed reaction is a 1,2-diacyl-sn-glycero-3-phosphocholine + H2O = a 1-acyl-sn-glycero-3-phosphocholine + a fatty acid + H(+). In terms of biological role, snake venom phospholipase A2 (PLA2) that shows a moderate inhibition of ADP-induced human platelet aggregation when tested on platelet rich plasma. Exhibits high hydrolytic activities and prefers the anionic micelles (dPPC with deoxycholate) to the zwitterionic micelles (dPPC with Triton X-100). PLA2 catalyzes the calcium-dependent hydrolysis of the 2-acyl groups in 3-sn-phosphoglycerides. In Trimeresurus stejnegeri (Chinese green tree viper), this protein is Acidic phospholipase A2 Ts-A6.